Here is a 366-residue protein sequence, read N- to C-terminus: Glutamate 5-kinase (366 aa).

Lysine 17 is a binding site for ATP. Substrate contacts are provided by serine 57, aspartate 144, and asparagine 156. ATP is bound by residues 176-177 and 216-222; these read SD and TGGMASK. A PUA domain is found at 278-352; it reads QGILHIDEGA…GKSTQELPAE (75 aa).

This sequence belongs to the glutamate 5-kinase family.

The protein localises to the cytoplasm. It catalyses the reaction L-glutamate + ATP = L-glutamyl 5-phosphate + ADP. Its pathway is amino-acid biosynthesis; L-proline biosynthesis; L-glutamate 5-semialdehyde from L-glutamate: step 1/2. In terms of biological role, catalyzes the transfer of a phosphate group to glutamate to form L-glutamate 5-phosphate. This Rhodococcus jostii (strain RHA1) protein is Glutamate 5-kinase.